Reading from the N-terminus, the 427-residue chain is Glutamate-1-semialdehyde 2,1-aminomutase (427 aa).

Residue Lys-265 is modified to N6-(pyridoxal phosphate)lysine.

This sequence belongs to the class-III pyridoxal-phosphate-dependent aminotransferase family. HemL subfamily. As to quaternary structure, homodimer. It depends on pyridoxal 5'-phosphate as a cofactor.

It is found in the cytoplasm. The enzyme catalyses (S)-4-amino-5-oxopentanoate = 5-aminolevulinate. Its pathway is porphyrin-containing compound metabolism; protoporphyrin-IX biosynthesis; 5-aminolevulinate from L-glutamyl-tRNA(Glu): step 2/2. The sequence is that of Glutamate-1-semialdehyde 2,1-aminomutase from Pseudomonas putida (strain ATCC 47054 / DSM 6125 / CFBP 8728 / NCIMB 11950 / KT2440).